Consider the following 1998-residue polypeptide: Receptor-type tyrosine-protein phosphatase beta (1998 aa).

The N-terminal stretch at 1-22 is a signal peptide; that stretch reads MLRHGALTALWITLSVVQTGVA. Fibronectin type-III domains follow at residues 23–109, 113–206, 207–291, 292–384, 378–466, 470–556, 557–642, 643–733, 734–821, 822–913, 908–994, 995–1088, 1086–1173, 1176–1263, 1264–1357, 1358–1449, and 1449–1551; these read EQVK…VLQT, PPAR…VPSP, VKDL…TAPM, EVSN…VRNL, PEKV…QGRT, AVLQ…TVPA, QVTD…EGRT, VPSS…TVPD, KVQG…TIPE, PVKD…TVKN, PSTV…LGQT, VPAS…VPAA, PAAV…GRTV, AVNH…TAPS, PPSL…TKPD, KIQN…IDRP, and PPQP…KLGA. Residues 23 to 1622 are Extracellular-facing; that stretch reads EQVKCNFTLL…ESEPLFGVIE (1600 aa). N-linked (GlcNAc...) asparagine glycans are attached at residues Asn-28, Asn-53, Asn-75, Asn-173, Asn-199, and Asn-268. N-linked (GlcNAc...) asparagine glycans are attached at residues Asn-415, Asn-422, Asn-480, Asn-575, Asn-599, and Asn-653. N-linked (GlcNAc...) asparagine glycosylation occurs at Asn-830. Residues Asn-1041, Asn-1097, Asn-1164, Asn-1186, Asn-1213, Asn-1275, Asn-1368, Asn-1471, Asn-1475, and Asn-1519 are each glycosylated (N-linked (GlcNAc...) asparagine). A helical transmembrane segment spans residues 1623–1643; sequence GVSAGLFLIGMLVALVAFFIC. The Cytoplasmic segment spans residues 1644–1997; that stretch reads RQKASHSRER…EYHRDAIYSR (354 aa). The Tyrosine-protein phosphatase domain maps to 1704–1964; the sequence is LSKEYEDLKD…VYLHQCVRDV (261 aa). Substrate contacts are provided by residues Asp-1871, 1905–1911, and Gln-1949; that span reads CSAGVGR. The active-site Phosphocysteine intermediate is Cys-1905. Residue Tyr-1982 is modified to Phosphotyrosine.

It belongs to the protein-tyrosine phosphatase family. Receptor class 3 subfamily. As to quaternary structure, monomer. Interacts with TEK. Interacts via fibronectin type-III 17 domain with CDH5. Detected in a complex with CNTN1 and NRCAM. Interacts (phosphorylated form) with FYN and GRB2. Interacts with IGFBP2. Expression is very high in the vasculature of lung, spleen, and kidney, as well as in the heart valves, and is also present in the endothelium of arterioles and venules. Also expressed in tumor vasculature.

It is found in the membrane. The catalysed reaction is O-phospho-L-tyrosyl-[protein] + H2O = L-tyrosyl-[protein] + phosphate. Plays an important role in blood vessel remodeling and angiogenesis. Not necessary for the initial formation of blood vessels, but is essential for their maintenance and remodeling. Can induce dephosphorylation of TEK/TIE2, CDH5/VE-cadherin and KDR/VEGFR-2. Regulates angiopoietin-TIE2 signaling in endothelial cells. Acts as a negative regulator of TIE2, and controls TIE2 driven endothelial cell proliferation, which in turn affects blood vessel remodeling during embryonic development and determines blood vessel size during perinatal growth. Essential for the maintenance of endothelial cell contact integrity and for the adhesive function of VE-cadherin in endothelial cells and this requires the presence of plakoglobin. The sequence is that of Receptor-type tyrosine-protein phosphatase beta (Ptprb) from Mus musculus (Mouse).